The chain runs to 232 residues: Beta-casein (232 aa).

The N-terminal stretch at 1–15 (MKLLILACFVALALA) is a signal peptide. Asn22 carries N-linked (GlcNAc...) asparagine glycosylation. A Phosphoserine modification is found at Ser24. Thr27 bears the Phosphothreonine mark. Phosphoserine occurs at positions 30, 32, 33, and 34. The span at 48 to 63 (KLKREEQQQTENERQN) shows a compositional bias: basic and acidic residues. Residues 48–74 (KLKREEQQQTENERQNKIHQFPQPQPL) form a disordered region.

The protein belongs to the beta-casein family. In terms of tissue distribution, mammary gland specific. Secreted in milk.

It is found in the secreted. Functionally, important role in determination of the surface properties of the casein micelles. This is Beta-casein (CSN2) from Sus scrofa (Pig).